The primary structure comprises 183 residues: uncharacterized protein (183 aa).

This sequence belongs to the EUO family.

This is an uncharacterized protein from Chlamydia trachomatis serovar D (strain ATCC VR-885 / DSM 19411 / UW-3/Cx).